The sequence spans 394 residues: p-hydroxybenzoate hydroxylase (394 aa).

Residues Ser13, Glu32, 42–47, and Gln102 contribute to the FAD site; that span reads RIRAGV. Residues Tyr201, 212 to 214, and Tyr222 each bind substrate; that span reads SQR. Asp286 contributes to the FAD binding site. Pro293 contacts substrate. Residue 299-300 coordinates FAD; it reads LN.

Belongs to the aromatic-ring hydroxylase family. Homodimer. FAD is required as a cofactor.

The catalysed reaction is 4-hydroxybenzoate + NADPH + O2 + H(+) = 3,4-dihydroxybenzoate + NADP(+) + H2O. The protein operates within aromatic compound metabolism; benzoate degradation via hydroxylation; 3,4-dihydroxybenzoate from benzoate: step 2/2. Catalyzes the incorporation of an atom of dioxygen into p-hydroxybenzoate (p-OHB) to form 3,4-dihydroxybenzoate (3,4DOHB). The reaction occurs in two parts: reduction of the flavin adenine dinucleotide (FAD) in the enzyme by reduced nicotinamide adenine dinucleotide phosphate (NADPH) in response to binding p-hydroxybenzoate to the enzyme and oxidation of reduced FAD with oxygen to form a hydroperoxide, which then oxygenates p-hydroxybenzoate. The protein is p-hydroxybenzoate hydroxylase (pobA) of Pseudomonas fluorescens.